The primary structure comprises 376 residues: Erythronate-4-phosphate dehydrogenase (376 aa).

Ser-45 and Thr-67 together coordinate substrate. Residues 127–128 (QV), Asp-147, and Thr-176 contribute to the NAD(+) site. Residue Arg-209 is part of the active site. Asp-233 is a binding site for NAD(+). Glu-238 is a catalytic residue. Catalysis depends on His-255, which acts as the Proton donor. Gly-258 serves as a coordination point for NAD(+). Tyr-259 contacts substrate.

Belongs to the D-isomer specific 2-hydroxyacid dehydrogenase family. PdxB subfamily. Homodimer.

It is found in the cytoplasm. It catalyses the reaction 4-phospho-D-erythronate + NAD(+) = (R)-3-hydroxy-2-oxo-4-phosphooxybutanoate + NADH + H(+). Its pathway is cofactor biosynthesis; pyridoxine 5'-phosphate biosynthesis; pyridoxine 5'-phosphate from D-erythrose 4-phosphate: step 2/5. Catalyzes the oxidation of erythronate-4-phosphate to 3-hydroxy-2-oxo-4-phosphonooxybutanoate. In Aliivibrio salmonicida (strain LFI1238) (Vibrio salmonicida (strain LFI1238)), this protein is Erythronate-4-phosphate dehydrogenase.